Here is a 148-residue protein sequence, read N- to C-terminus: Large ribosomal subunit protein bL9 (148 aa).

Belongs to the bacterial ribosomal protein bL9 family.

Its function is as follows. Binds to the 23S rRNA. The chain is Large ribosomal subunit protein bL9 from Streptomyces avermitilis (strain ATCC 31267 / DSM 46492 / JCM 5070 / NBRC 14893 / NCIMB 12804 / NRRL 8165 / MA-4680).